Here is a 519-residue protein sequence, read N- to C-terminus: 2-isopropylmalate synthase (519 aa).

The Pyruvate carboxyltransferase domain maps to 12–274; the sequence is VVIFDTTLRD…WCNVESTTLT (263 aa). Positions 21, 209, 211, and 245 each coordinate Mn(2+). Residues 398-519 are regulatory domain; sequence RLVSLTVIAG…QREAPVAAAS (122 aa).

The protein belongs to the alpha-IPM synthase/homocitrate synthase family. LeuA type 1 subfamily. Homodimer. Requires Mn(2+) as cofactor.

It localises to the cytoplasm. It carries out the reaction 3-methyl-2-oxobutanoate + acetyl-CoA + H2O = (2S)-2-isopropylmalate + CoA + H(+). It functions in the pathway amino-acid biosynthesis; L-leucine biosynthesis; L-leucine from 3-methyl-2-oxobutanoate: step 1/4. Catalyzes the condensation of the acetyl group of acetyl-CoA with 3-methyl-2-oxobutanoate (2-ketoisovalerate) to form 3-carboxy-3-hydroxy-4-methylpentanoate (2-isopropylmalate). The sequence is that of 2-isopropylmalate synthase from Afipia carboxidovorans (strain ATCC 49405 / DSM 1227 / KCTC 32145 / OM5) (Oligotropha carboxidovorans).